A 130-amino-acid polypeptide reads, in one-letter code: MSKQLRQSTKKTKRRLYRGVIHIQTSYNNTIITVTNIKGDVMCWSSAGSSGLKGKRKSTAYAAKLAAANAARKAIRDFSLREAKVLITGPGPARETAIHEIYKAGIKLTVIREKSTVPHNGCRPPKRRRI.

This sequence belongs to the universal ribosomal protein uS11 family. Part of the 30S ribosomal subunit.

It is found in the plastid. The protein resides in the chloroplast. In Oedogonium cardiacum (Filamentous green alga), this protein is Small ribosomal subunit protein uS11c.